The chain runs to 68 residues: Putative membrane protein insertion efficiency factor (68 aa).

The protein belongs to the UPF0161 family.

It is found in the cell inner membrane. Its function is as follows. Could be involved in insertion of integral membrane proteins into the membrane. In Aquifex aeolicus (strain VF5), this protein is Putative membrane protein insertion efficiency factor.